The following is a 389-amino-acid chain: Phospho-N-acetylmuramoyl-pentapeptide-transferase (389 aa).

10 consecutive transmembrane segments (helical) span residues arginine 25–isoleucine 45, threonine 73–leucine 93, phenylalanine 97–tyrosine 117, phenylalanine 135–alanine 155, isoleucine 190–alanine 210, glycine 222–methionine 242, glycine 258–tryptophan 278, valine 286–isoleucine 306, isoleucine 311–valine 331, and glutamine 366–leucine 386.

It belongs to the glycosyltransferase 4 family. MraY subfamily. Mg(2+) serves as cofactor.

It is found in the cell inner membrane. It catalyses the reaction UDP-N-acetyl-alpha-D-muramoyl-L-alanyl-gamma-D-glutamyl-meso-2,6-diaminopimeloyl-D-alanyl-D-alanine + di-trans,octa-cis-undecaprenyl phosphate = di-trans,octa-cis-undecaprenyl diphospho-N-acetyl-alpha-D-muramoyl-L-alanyl-D-glutamyl-meso-2,6-diaminopimeloyl-D-alanyl-D-alanine + UMP. Its pathway is cell wall biogenesis; peptidoglycan biosynthesis. Functionally, catalyzes the initial step of the lipid cycle reactions in the biosynthesis of the cell wall peptidoglycan: transfers peptidoglycan precursor phospho-MurNAc-pentapeptide from UDP-MurNAc-pentapeptide onto the lipid carrier undecaprenyl phosphate, yielding undecaprenyl-pyrophosphoryl-MurNAc-pentapeptide, known as lipid I. The chain is Phospho-N-acetylmuramoyl-pentapeptide-transferase from Burkholderia multivorans (strain ATCC 17616 / 249).